The following is a 335-amino-acid chain: Mitochondrial carrier protein CoAc2 (335 aa).

Helical transmembrane passes span 12 to 32 (SGPGLPLAVRELLAGGVAGGV), 75 to 95 (FYRGNGASVARIVPYAALHYM), 119 to 139 (LVAGSIAGGTAVICTYPLDLV), 187 to 207 (GMAPSLYGIFPYSGLKFYFYE), 225 to 242 (LGCGSVAGLLGQTITYPL), and 280 to 302 (LFSGLSINYLKVVPSVAIGFTVY). 3 Solcar repeats span residues 17–103 (PLAV…YRRW), 113–212 (QGPV…MKSH), and 219–308 (KGII…MKVC).

This sequence belongs to the mitochondrial carrier (TC 2.A.29) family. In terms of tissue distribution, expressed throughout the plant.

It is found in the mitochondrion inner membrane. Required for the accumulation of coenzyme A in the mitochondrial matrix. This is Mitochondrial carrier protein CoAc2 from Zea mays (Maize).